The sequence spans 1040 residues: Multidrug resistance protein MdtB (1040 aa).

Transmembrane regions (helical) follow at residues 16–36, 347–367, 369–389, 396–416, 440–460, 472–492, 537–557, 863–883, 888–908, 911–931, 968–988, and 998–1018; these read FIMRPVATTLLMVAILLAGII, LMMAIALVVMIIYLFLRNIPA, IIPGVAVPLSLIGTFAVMVFL, LTLMALTIATGFVVDDAIVVI, IGFTIISLIFSLIAVLIPLLF, FAITLAVAILISAVVSLTLTP, WLTLSVALSTLLLSVLLWVFI, LGSTVWLIVAAVVAMYIVLGI, FIHPITILSTLPTAGVGALLA, IAGSELDVIAIIGIILLIGIV, ILMTTLAALLGALPLMLSTGV, and IGMVGGLIVSQVLTLFTTPVI.

This sequence belongs to the resistance-nodulation-cell division (RND) (TC 2.A.6) family. MdtB subfamily. In terms of assembly, part of a tripartite efflux system composed of MdtA, MdtB and MdtC. MdtB forms a heteromultimer with MdtC.

Its subcellular location is the cell inner membrane. The chain is Multidrug resistance protein MdtB from Shigella boydii serotype 4 (strain Sb227).